The chain runs to 791 residues: Putative DNA (cytosine-5)-methyltransferase CMT1 (791 aa).

The disordered stretch occupies residues Tyr-37–Glu-59. The BAH domain occupies Val-79 to Asp-199. An SAM-dependent MTase C5-type domain is found at Lys-225–Leu-768. Residues Val-308 to Glu-333 are a coiled coil. One can recognise a Chromo domain in the interval Phe-339–Leu-404. The active site involves Cys-417.

The protein belongs to the class I-like SAM-binding methyltransferase superfamily. C5-methyltransferase family. In terms of tissue distribution, expressed in flowers. Not detected in leaves, roots, seedlings and plants prior formation of flower buds.

Its subcellular location is the nucleus. It catalyses the reaction a 2'-deoxycytidine in DNA + S-adenosyl-L-methionine = a 5-methyl-2'-deoxycytidine in DNA + S-adenosyl-L-homocysteine + H(+). May be involved in the CpXpG methylation and in gene silencing. This is Putative DNA (cytosine-5)-methyltransferase CMT1 (CMT1) from Arabidopsis thaliana (Mouse-ear cress).